Here is a 181-residue protein sequence, read N- to C-terminus: Translationally-controlled tumor protein homolog (181 aa).

Residues 1–181 enclose the TCTP domain; it reads MLIFKDAFTD…VKEALIEEKQ (181 aa).

The protein belongs to the TCTP family.

It localises to the cytoplasm. In terms of biological role, involved in calcium binding and microtubule stabilization. In Brugia malayi (Filarial nematode worm), this protein is Translationally-controlled tumor protein homolog.